Reading from the N-terminus, the 179-residue chain is O-acetyl-ADP-ribose deacetylase (179 aa).

Residues 1–175 (MTSRLQVIQG…LYARLLTQQG (175 aa)) form the Macro domain. Substrate contacts are provided by residues 11–12 (DI), asparagine 25, 33–35 (GVD), and 122–126 (STGVY). The Proton acceptor role is filled by aspartate 35.

It belongs to the MacroD-type family. YmdB subfamily. As to quaternary structure, homodimer. Interacts with RNase III.

The enzyme catalyses 3''-O-acetyl-ADP-D-ribose + H2O = ADP-D-ribose + acetate + H(+). It carries out the reaction 2''-O-acetyl-ADP-D-ribose + H2O = ADP-D-ribose + acetate + H(+). In terms of biological role, deacetylates O-acetyl-ADP ribose to yield ADP-ribose and free acetate. Down-regulates ribonuclease 3 (RNase III) activity. Acts by interacting directly with the region of the ribonuclease that is required for dimerization/activation. This chain is O-acetyl-ADP-ribose deacetylase, found in Salmonella gallinarum (strain 287/91 / NCTC 13346).